The following is a 327-amino-acid chain: Tetraacyldisaccharide 4'-kinase (327 aa).

Threonine 52–threonine 59 contributes to the ATP binding site.

Belongs to the LpxK family.

The enzyme catalyses a lipid A disaccharide + ATP = a lipid IVA + ADP + H(+). Its pathway is glycolipid biosynthesis; lipid IV(A) biosynthesis; lipid IV(A) from (3R)-3-hydroxytetradecanoyl-[acyl-carrier-protein] and UDP-N-acetyl-alpha-D-glucosamine: step 6/6. In terms of biological role, transfers the gamma-phosphate of ATP to the 4'-position of a tetraacyldisaccharide 1-phosphate intermediate (termed DS-1-P) to form tetraacyldisaccharide 1,4'-bis-phosphate (lipid IVA). This Gluconacetobacter diazotrophicus (strain ATCC 49037 / DSM 5601 / CCUG 37298 / CIP 103539 / LMG 7603 / PAl5) protein is Tetraacyldisaccharide 4'-kinase.